The following is a 511-amino-acid chain: Histidine ammonia-lyase (511 aa).

The 5-imidazolinone (Ala-Gly) cross-link spans 142–144; sequence ASG. The residue at position 143 (Ser-143) is a 2,3-didehydroalanine (Ser).

It belongs to the PAL/histidase family. Post-translationally, contains an active site 4-methylidene-imidazol-5-one (MIO), which is formed autocatalytically by cyclization and dehydration of residues Ala-Ser-Gly.

Its subcellular location is the cytoplasm. It carries out the reaction L-histidine = trans-urocanate + NH4(+). It participates in amino-acid degradation; L-histidine degradation into L-glutamate; N-formimidoyl-L-glutamate from L-histidine: step 1/3. This is Histidine ammonia-lyase from Brucella abortus (strain S19).